We begin with the raw amino-acid sequence, 216 residues long: MSELKIKAAKAAIAYIEDDMVIGVGTGSTVNFFIKELAAIKHKIEACVASSKATEALLRAEGIPVIDLNSVQDLPIYVDGADEVNERGEMIKGGGGALTREKIVANVATQFICIVDESKVVKRLGEFPVAVEVIPMARSFVARQIVKLGGDPEYREGFITDNGNIILDVFNLNFSTPMALEDSLNVIPGVVENGVFAKRLADKVLVASASGVNNLK.

Substrate is bound by residues 26–29 (TGST), 79–82 (DGAD), and 92–95 (KGGG). The active-site Proton acceptor is Glu101. Lys119 provides a ligand contact to substrate.

It belongs to the ribose 5-phosphate isomerase family. As to quaternary structure, homodimer.

The enzyme catalyses aldehydo-D-ribose 5-phosphate = D-ribulose 5-phosphate. The protein operates within carbohydrate degradation; pentose phosphate pathway; D-ribose 5-phosphate from D-ribulose 5-phosphate (non-oxidative stage): step 1/1. Functionally, catalyzes the reversible conversion of ribose-5-phosphate to ribulose 5-phosphate. The polypeptide is Ribose-5-phosphate isomerase A (Legionella pneumophila (strain Lens)).